Reading from the N-terminus, the 140-residue chain is Seminal plasma protein A3 (140 aa).

A signal peptide spans 1-25 (MALRLGLFLIWAGVSMFLQLDPVNG). Fibronectin type-II domains lie at 49–93 (TKDN…YCTK) and 94–140 (NDYA…WKYC). Intrachain disulfides connect Cys-54-Cys-78, Cys-68-Cys-91, Cys-99-Cys-125, and Cys-113-Cys-140.

The protein belongs to the seminal plasma protein family.

Its subcellular location is the secreted. In terms of biological role, the BSP-A proteins from seminal plasma exhibit both simulatory and inhibitory actions on the release of pituitary gonadotropins. The exact function of these proteins is not known. The protein is Seminal plasma protein A3 of Bos taurus (Bovine).